We begin with the raw amino-acid sequence, 131 residues long: DNA-directed RNA polymerase subunit Rpo8 (131 aa).

This sequence belongs to the archaeal Rpo8 RNA polymerase subunit family. In terms of assembly, part of the 13-subunit RNA polymerase complex. Interacts with Rpo1N on the periphery of the clamp head.

Its subcellular location is the cytoplasm. It catalyses the reaction RNA(n) + a ribonucleoside 5'-triphosphate = RNA(n+1) + diphosphate. DNA-dependent RNA polymerase (RNAP) catalyzes the transcription of DNA into RNA using the four ribonucleoside triphosphates as substrates. The protein is DNA-directed RNA polymerase subunit Rpo8 of Saccharolobus shibatae (strain ATCC 51178 / DSM 5389 / JCM 8931 / NBRC 15437 / B12) (Sulfolobus shibatae).